The chain runs to 396 residues: Probable mannan endo-1,4-beta-mannosidase A-2 (396 aa).

Positions 1 to 21 (MKVPRLLLALGGLASIHIASA) are cleaved as a signal peptide. Trp99 contacts substrate. N-linked (GlcNAc...) asparagine glycosylation is present at Asn120. Substrate is bound at residue Asn212. The Proton donor role is filled by Glu213. Residue Asn270 is glycosylated (N-linked (GlcNAc...) asparagine). Residue Tyr288 coordinates substrate. The Nucleophile role is filled by Glu321. Residue Trp351 participates in substrate binding.

Belongs to the glycosyl hydrolase 5 (cellulase A) family.

The protein resides in the secreted. The catalysed reaction is Random hydrolysis of (1-&gt;4)-beta-D-mannosidic linkages in mannans, galactomannans and glucomannans.. Functionally, endo-1,4-mannanase, a crucial enzyme for depolymerization of seed galactomannans and wood galactoglucomannans. This chain is Probable mannan endo-1,4-beta-mannosidase A-2 (manA-2), found in Aspergillus terreus (strain NIH 2624 / FGSC A1156).